Consider the following 150-residue polypeptide: Putative flagella-related protein G (150 aa).

Residues 9–29 (IILFVSVLIITAAVSGILATS) form a helical membrane-spanning segment.

It belongs to the archaeal FlaG family.

Its subcellular location is the cell membrane. The protein localises to the archaeal flagellum. This Methanococcus voltae protein is Putative flagella-related protein G (flaG).